Reading from the N-terminus, the 38-residue chain is Photosystem II reaction center protein L (38 aa).

Residues 17–37 form a helical membrane-spanning segment; it reads SLYWGLLLIFVLAVLFSNYFF.

It belongs to the PsbL family. In terms of assembly, PSII is composed of 1 copy each of membrane proteins PsbA, PsbB, PsbC, PsbD, PsbE, PsbF, PsbH, PsbI, PsbJ, PsbK, PsbL, PsbM, PsbT, PsbX, PsbY, PsbZ, Psb30/Ycf12, at least 3 peripheral proteins of the oxygen-evolving complex and a large number of cofactors. It forms dimeric complexes.

It localises to the plastid. The protein resides in the chloroplast thylakoid membrane. In terms of biological role, one of the components of the core complex of photosystem II (PSII). PSII is a light-driven water:plastoquinone oxidoreductase that uses light energy to abstract electrons from H(2)O, generating O(2) and a proton gradient subsequently used for ATP formation. It consists of a core antenna complex that captures photons, and an electron transfer chain that converts photonic excitation into a charge separation. This subunit is found at the monomer-monomer interface and is required for correct PSII assembly and/or dimerization. In Huperzia lucidula (Shining clubmoss), this protein is Photosystem II reaction center protein L.